The chain runs to 273 residues: Outer surface protein A (273 aa).

Residues 1–16 form the signal peptide; that stretch reads MKKYLLGIGLILALIA. Residue Cys17 is the site of N-palmitoyl cysteine attachment. Residue Cys17 is the site of S-diacylglycerol cysteine attachment.

The protein belongs to the OspA lipoprotein family.

Its subcellular location is the cell outer membrane. The protein resides in the cell surface. This is Outer surface protein A from Borreliella burgdorferi (Lyme disease spirochete).